The following is a 731-amino-acid chain: SUN domain-containing protein 2 (731 aa).

2 disordered regions span residues 1 to 69 (MSRR…SHTS) and 106 to 142 (SGDL…FGSS). Residues 1–128 (MSRRSQRLTR…GSESSKANGL (128 aa)) form an LMNA-binding region. The Nuclear segment spans residues 1–226 (MSRRSQRLTR…SRHFSLNLKS (226 aa)). Serine 12 carries the post-translational modification Phosphoserine. The span at 18-33 (GGSSSSGASSVAGSQG) shows a compositional bias: low complexity. A phosphoserine mark is found at serine 39 and serine 55. Threonine 117 is modified (phosphothreonine). Serine 120, serine 123, and serine 147 each carry phosphoserine. A helical transmembrane segment spans residues 227–247 (FLWFLLLLLLLTGLTYGAWHF). Topologically, residues 248-731 (YPLGLQTLQP…RFRVHGEPAH (484 aa)) are perinuclear space. Coiled coils occupy residues 396 to 452 (QESE…VADE) and 486 to 519 (RSGL…KSAR). Residues 521-731 (AAASLGQILQ…RFRVHGEPAH (211 aa)) form a sufficient for interaction with SYNE1 and SYNE2 region. An SUN domain is found at 569-730 (GASVISTRCS…YRFRVHGEPA (162 aa)). N-linked (GlcNAc...) asparagine glycosylation occurs at asparagine 650.

In terms of assembly, core component of the LINC complex which is composed of inner nuclear membrane SUN domain-containing proteins coupled to outer nuclear membrane KASH domain-containing nesprins. SUN and KASH domain-containing proteins seem to bind each other promiscuously; however, differentially expression of LINC complex constituents is giving rise to specific assemblies. At least SUN1/2-containing core LINC complexes are proposed to be hexameric composed of three protomers of each KASH and SUN domain-containing protein. Interacts with SYNE2; the SUN2:SYNE2/KASH2 LINC complex is a heterohexamer; the homotrimeric cloverleave-like conformation of the SUN domain is a prerequisite for LINC complex formation in which three separate SYNE2/KASH2 peptides bind at the interface of adjacent SUN domains. Component of a probable SUN2:KASH5 LINC complex. Interacts with SYNE1 and SYNE3; probably forming respective LINC complexes. Interacts with A-type lamin. Interaction with lamins B1 and C is hardly detectable. Interacts with EMD. Interacts with RAB5A. Interacts with TMEM43 and TMEM201. Interacts with IRAG2. Post-translationally, the disulfide bond with SYNE2 is required for stability of the SUN2:SYNE2/KASH2 LINC complex under tensile forces though not required for the interaction. The disulfide bond is proposed to be conserved in LINC complexes involved in force transmission. As to expression, highly expressed in heart, placenta and muscle.

The protein resides in the nucleus inner membrane. It is found in the nucleus envelope. Its subcellular location is the endosome membrane. Functionally, as a component of the LINC (LInker of Nucleoskeleton and Cytoskeleton) complex, involved in the connection between the nuclear lamina and the cytoskeleton. The nucleocytoplasmic interactions established by the LINC complex play an important role in the transmission of mechanical forces across the nuclear envelope and in nuclear movement and positioning. Specifically, SYNE2 and SUN2 assemble in arrays of transmembrane actin-associated nuclear (TAN) lines which are bound to F-actin cables and couple the nucleus to retrograde actin flow during actin-dependent nuclear movement. Required for interkinetic nuclear migration (INM) and essential for nucleokinesis and centrosome-nucleus coupling during radial neuronal migration in the cerebral cortex and during glial migration. Required for nuclear migration in retinal photoreceptor progenitors implicating association with cytoplasmic dynein-dynactin and kinesin motor complexes, and probably B-type lamins; SUN1 and SUN2 seem to act redundantly. The SUN1/2:KASH5 LINC complex couples telomeres to microtubules during meiosis; SUN1 and SUN2 seem to act at least partial redundantly. Anchors chromosome movement in the prophase of meiosis and is involved in selective gene expression of coding and non-coding RNAs needed for gametogenesis. Required for telomere attachment to nuclear envelope and gametogenesis. May also function on endocytic vesicles as a receptor for Rab5-GDP and participate in the activation of Rab5. This chain is SUN domain-containing protein 2, found in Mus musculus (Mouse).